The following is a 513-amino-acid chain: Sterol 14-alpha demethylase (513 aa).

The helical transmembrane segment at 10-30 threads the bilayer; that stretch reads FTLVSAYAAAGLLAIIVLNLL. Asn37 and Asn406 each carry an N-linked (GlcNAc...) asparagine glycan. Heme is bound at residue Cys453.

This sequence belongs to the cytochrome P450 family. It depends on heme as a cofactor.

Its subcellular location is the endoplasmic reticulum membrane. It carries out the reaction a 14alpha-methyl steroid + 3 reduced [NADPH--hemoprotein reductase] + 3 O2 = a Delta(14) steroid + formate + 3 oxidized [NADPH--hemoprotein reductase] + 4 H2O + 4 H(+). It catalyses the reaction a 14alpha-methyl steroid + reduced [NADPH--hemoprotein reductase] + O2 = a 14alpha-hydroxymethyl steroid + oxidized [NADPH--hemoprotein reductase] + H2O + H(+). The catalysed reaction is a 14alpha-hydroxymethyl steroid + reduced [NADPH--hemoprotein reductase] + O2 = a 14alpha-formyl steroid + oxidized [NADPH--hemoprotein reductase] + 2 H2O + H(+). The enzyme catalyses a 14alpha-formyl steroid + reduced [NADPH--hemoprotein reductase] + O2 = a Delta(14) steroid + formate + oxidized [NADPH--hemoprotein reductase] + H2O + 2 H(+). It carries out the reaction lanosterol + 3 reduced [NADPH--hemoprotein reductase] + 3 O2 = 4,4-dimethyl-5alpha-cholesta-8,14,24-trien-3beta-ol + formate + 3 oxidized [NADPH--hemoprotein reductase] + 4 H2O + 4 H(+). It catalyses the reaction lanosterol + reduced [NADPH--hemoprotein reductase] + O2 = 32-hydroxylanosterol + oxidized [NADPH--hemoprotein reductase] + H2O + H(+). The catalysed reaction is 32-hydroxylanosterol + reduced [NADPH--hemoprotein reductase] + O2 = 32-oxolanosterol + oxidized [NADPH--hemoprotein reductase] + 2 H2O + H(+). The enzyme catalyses 32-oxolanosterol + reduced [NADPH--hemoprotein reductase] + O2 = 4,4-dimethyl-5alpha-cholesta-8,14,24-trien-3beta-ol + formate + oxidized [NADPH--hemoprotein reductase] + H2O + 2 H(+). It carries out the reaction eburicol + 3 reduced [NADPH--hemoprotein reductase] + 3 O2 = 14-demethyleburicol + formate + 3 oxidized [NADPH--hemoprotein reductase] + 4 H2O + 4 H(+). It catalyses the reaction eburicol + reduced [NADPH--hemoprotein reductase] + O2 = 32-hydroxyeburicol + oxidized [NADPH--hemoprotein reductase] + H2O + H(+). The catalysed reaction is 32-hydroxyeburicol + reduced [NADPH--hemoprotein reductase] + O2 = 32-oxoeburicol + oxidized [NADPH--hemoprotein reductase] + 2 H2O + H(+). The enzyme catalyses 32-oxoeburicol + reduced [NADPH--hemoprotein reductase] + O2 = 14-demethyleburicol + formate + oxidized [NADPH--hemoprotein reductase] + H2O + 2 H(+). The protein operates within steroid biosynthesis; sterol biosynthesis. Functionally, sterol 14alpha-demethylase, encoded by cyp51A, cyp51B and cyp51C, that plays a critical role in the third module of ergosterol biosynthesis pathway, being ergosterol the major sterol component in fungal membranes that participates in a variety of functions. The third module or late pathway involves the ergosterol synthesis itself through consecutive reactions that mainly occur in the endoplasmic reticulum (ER) membrane. In filamentous fungi, during the initial step of this module, lanosterol (lanosta-8,24-dien-3beta-ol) can be metabolized to eburicol. Sterol 14alpha-demethylase catalyzes the three-step oxidative removal of the 14alpha-methyl group (C-32) of both these sterols in the form of formate, and converts eburicol and lanosterol to 14-demethyleburicol (4,4,24-trimethylergosta-8,14,24(28)-trienol) and 4,4-dimethyl-5alpha-cholesta-8,14,24-trien-3beta-ol, respectively, which are further metabolized by other enzymes in the pathway to ergosterol. Can also use substrates not intrinsic to fungi, such as 24,25-dihydrolanosterol (DHL), producing 4,4'-dimethyl-8,14-cholestadien-3-beta-ol, but at lower rates than the endogenous substrates. In terms of biological role, as a target of azole drugs, plays a crucial role in azole susceptibility. The sequence is that of Sterol 14-alpha demethylase from Aspergillus flavus (strain ATCC 200026 / FGSC A1120 / IAM 13836 / NRRL 3357 / JCM 12722 / SRRC 167).